Reading from the N-terminus, the 349-residue chain is Alcohol dehydrogenase 1 (349 aa).

Residues Cys46, His69, Cys100, Cys103, Cys106, Cys114, and Cys156 each coordinate Zn(2+). NAD(+) contacts are provided by residues 180 to 186 (GAGGGLG), Asp204, Lys208, 270 to 272 (VGL), and Arg342.

Belongs to the zinc-containing alcohol dehydrogenase family. Homotetramer. Requires Zn(2+) as cofactor.

The catalysed reaction is a primary alcohol + NAD(+) = an aldehyde + NADH + H(+). It catalyses the reaction a secondary alcohol + NAD(+) = a ketone + NADH + H(+). This is Alcohol dehydrogenase 1 from Caenorhabditis elegans.